A 447-amino-acid chain; its full sequence is Sporulation protein YpeB (447 aa).

This sequence belongs to the YpeB family.

Its function is as follows. Required for spore cortex hydrolysis during germination. Appears to be required for either expression, localization, activation or function of SleB. This chain is Sporulation protein YpeB, found in Oceanobacillus iheyensis (strain DSM 14371 / CIP 107618 / JCM 11309 / KCTC 3954 / HTE831).